Consider the following 417-residue polypeptide: uncharacterized protein (417 aa).

10 helical membrane passes run 21–41 (ISSLGDWLHILAVLTLAAFQL), 50–70 (LLMMSFALPVIVLGPVSGLLA), 88–108 (LTVISCVYVSELWQLYVLLSV), 166–186 (SVFYINAGAFFLSAVILFFLP), 217–237 (MPLLLTGLLTACVVLFVLQIG), 255–275 (LAGWCMAVSGAGMLLTAAITG), 283–303 (LLYFSAGTLLLGLATGGAPFL), 308–328 (IAGITLFIFAFFIMGAAFGLV), 351–371 (AIQSATTLASILGMAGGGVLA), and 373–393 (WIGVSLAFLVCGCLLIMIGLI).

Belongs to the major facilitator superfamily. TCR/Tet family.

It localises to the cell membrane. This is an uncharacterized protein from Bacillus subtilis (strain 168).